The chain runs to 348 residues: Ferredoxin--NADP reductase 1 (348 aa).

Positions 33, 41, 45, 85, 120, 287, and 328 each coordinate FAD.

Belongs to the ferredoxin--NADP reductase type 2 family. In terms of assembly, homodimer. The cofactor is FAD.

It carries out the reaction 2 reduced [2Fe-2S]-[ferredoxin] + NADP(+) + H(+) = 2 oxidized [2Fe-2S]-[ferredoxin] + NADPH. The chain is Ferredoxin--NADP reductase 1 from Oceanobacillus iheyensis (strain DSM 14371 / CIP 107618 / JCM 11309 / KCTC 3954 / HTE831).